A 149-amino-acid polypeptide reads, in one-letter code: 3-dehydroquinate dehydratase (149 aa).

Tyr-26 serves as the catalytic Proton acceptor. Substrate contacts are provided by Asn-77, His-83, and Asp-90. The active-site Proton donor is His-103. Substrate-binding positions include Leu-104–Ser-105 and Arg-114.

The protein belongs to the type-II 3-dehydroquinase family. Homododecamer.

It carries out the reaction 3-dehydroquinate = 3-dehydroshikimate + H2O. It functions in the pathway metabolic intermediate biosynthesis; chorismate biosynthesis; chorismate from D-erythrose 4-phosphate and phosphoenolpyruvate: step 3/7. In terms of biological role, catalyzes a trans-dehydration via an enolate intermediate. In Haemophilus influenzae (strain PittGG), this protein is 3-dehydroquinate dehydratase.